The primary structure comprises 301 residues: Rhodopsin (301 aa).

At leucine 1–methionine 18 the chain is on the extracellular side. A helical transmembrane segment spans residues tyrosine 19 to valine 43. The Cytoplasmic portion of the chain corresponds to phenylalanine 44–asparagine 55. A helical membrane pass occupies residues leucine 56–isoleucine 78. Residues threonine 79 to cysteine 92 are Extracellular-facing. Cysteine 92 and cysteine 169 are joined by a disulfide. Residues glutamine 93–phenylalanine 115 form a helical membrane-spanning segment. The short motif at aspartate 116–tyrosine 118 is the 'Ionic lock' involved in activated form stabilization element. At aspartate 116–lysine 134 the chain is on the cytoplasmic side. A helical membrane pass occupies residues alanine 135–phenylalanine 155. The Extracellular portion of the chain corresponds to glycine 156–serine 182. N-linked (GlcNAc...) asparagine glycosylation occurs at asparagine 165. A helical transmembrane segment spans residues tyrosine 183–valine 204. Over phenylalanine 205–lysine 245 the chain is Cytoplasmic. Residues isoleucine 246 to valine 267 traverse the membrane as a helical segment. Over glycine 268–valine 278 the chain is Extracellular. The helical transmembrane segment at tyrosine 279–isoleucine 300 threads the bilayer. Residue lysine 288 is modified to N6-(retinylidene)lysine.

This sequence belongs to the G-protein coupled receptor 1 family. Opsin subfamily. Homodimer. Interacts with GNAQ. Post-translationally, contains one covalently linked retinal chromophore.

The protein resides in the cell projection. Its subcellular location is the rhabdomere membrane. Functionally, photoreceptor required for image-forming vision at low light intensity. Can use both retinal and 3-dehydroretinal as visual pigment. Light-induced isomerization of 11-cis to all-trans retinal triggers a conformational change that activates signaling via G-proteins. Signaling via GNAQ probably mediates the activation of phospholipase C. The chain is Rhodopsin (RHO) from Cambarellus shufeldtii (Cajun dwarf crayfish).